We begin with the raw amino-acid sequence, 702 residues long: Elongation factor G 2 (702 aa).

The tr-type G domain occupies 8–285 (DMVRNIGISA…AVTYYLPSPA (278 aa)). GTP contacts are provided by residues 17-24 (AHIDSGKT), 84-88 (DTPGH), and 138-141 (NKLD).

This sequence belongs to the TRAFAC class translation factor GTPase superfamily. Classic translation factor GTPase family. EF-G/EF-2 subfamily.

Its subcellular location is the cytoplasm. Its function is as follows. Catalyzes the GTP-dependent ribosomal translocation step during translation elongation. During this step, the ribosome changes from the pre-translocational (PRE) to the post-translocational (POST) state as the newly formed A-site-bound peptidyl-tRNA and P-site-bound deacylated tRNA move to the P and E sites, respectively. Catalyzes the coordinated movement of the two tRNA molecules, the mRNA and conformational changes in the ribosome. The polypeptide is Elongation factor G 2 (Bdellovibrio bacteriovorus (strain ATCC 15356 / DSM 50701 / NCIMB 9529 / HD100)).